The sequence spans 533 residues: MFQFHAGSWESWCCCCCLIPGDRPWDRGRRWRLEMADTRSVHETRFEAAVKVIQSLPKNGSFQPTNEMMLKFYSFYKQATEGPCKLSKPGFWDPVGRYKWDAWSSLGDMTKEEAMIAYVEEMKKILETMPMTEKVEELLHVIGPFYEIVEDKKSGRSSDLTSVRLEKISKCLEDLGNVLASTPNAKTVNGKAESSDSGAESEEEAAQEDPKRPEPRDSDKKMMKKSADHKNLEIIVTNGYDKDSFVQGVQNSIHTSPSLNGRCTEEVKSVDENLEQTGKTVVFVHQDVNSDHVEDISGIQHLTSDSDSEVYCDSMEQFGQEESLDGFISNNGPFSYYLGGNPSQPLESSGFPEAVQGLPGNGSPEDMQGAVVEGKGEVKRGGEDGGSNSGAPHREKRAGESEEFSNIRRGRGHRMQHLSEGSKGRQVGSGGDGERWGSDRGSRGSLNEQIALVLMRLQEDMQNVLQRLHKLEMLAASQAKSSALQTSNQPTSPRPSWWPFEMSPGALTFAIIWPFIAQWLVHLYYQRRRRKLN.

An ACB domain is found at 42–131; sequence HETRFEAAVK…MKKILETMPM (90 aa). An acyl-CoA-binding positions include 53–62, 73–77, lysine 99, and tyrosine 118; these read IQSLPKNGSF and YSFYK. The disordered stretch occupies residues 182–227; that stretch reads TPNAKTVNGKAESSDSGAESEEEAAQEDPKRPEPRDSDKKMMKKSA. A phosphoserine mark is found at serine 194, serine 195, serine 197, and serine 201. Over residues 208 to 227 the composition is skewed to basic and acidic residues; sequence EDPKRPEPRDSDKKMMKKSA. Residues serine 244 and serine 314 each carry the phosphoserine modification. The disordered stretch occupies residues 339-443; it reads GGNPSQPLES…ERWGSDRGSR (105 aa). Basic and acidic residues predominate over residues 374–383; sequence GKGEVKRGGE. Serine 429 is subject to Phosphoserine. Over residues 432–442 the composition is skewed to basic and acidic residues; it reads DGERWGSDRGS. Residues 448 to 478 adopt a coiled-coil conformation; sequence EQIALVLMRLQEDMQNVLQRLHKLEMLAASQ. Residue lysine 470 is modified to N6-acetyllysine. A helical membrane pass occupies residues 503-525; that stretch reads SPGALTFAIIWPFIAQWLVHLYY.

The protein belongs to the ATG37 family. Highly expressed in brain and liver. Lower levels of expression in spleen and heart.

The protein resides in the peroxisome membrane. Its function is as follows. Acyl-CoA binding protein which acts as the peroxisome receptor for pexophagy but is dispensable for aggrephagy and nonselective autophagy. Binds medium- and long-chain acyl-CoA esters. This Bos taurus (Bovine) protein is Acyl-CoA-binding domain-containing protein 5 (ACBD5).